Here is a 421-residue protein sequence, read N- to C-terminus: 3-alpha-mycarosylerythronolide B desosaminyl transferase (421 aa).

The N-terminal stretch at 1 to 23 (MRVVFSSMASKSHLFGLVPLAWA) is a signal peptide.

Belongs to the glycosyltransferase 28 family. In terms of assembly, heterotetramer composed of EryCII and EryCIII.

It catalyses the reaction 3-O-alpha-L-mycarosylerythronolide B + dTDP-alpha-D-desosamine = erythromycin D + dTDP + H(+). The protein operates within antibiotic biosynthesis; erythromycin biosynthesis. Functionally, catalyzes the conversion of alpha-L-mycarosylerythronolide B into erythromycin D in the erythromycin biosynthesis pathway. This Saccharopolyspora erythraea (strain ATCC 11635 / DSM 40517 / JCM 4748 / NBRC 13426 / NCIMB 8594 / NRRL 2338) protein is 3-alpha-mycarosylerythronolide B desosaminyl transferase (eryCIII).